Here is a 141-residue protein sequence, read N- to C-terminus: Nucleoside diphosphate kinase (141 aa).

Positions 11, 59, 87, 93, 104, and 114 each coordinate ATP. The Pros-phosphohistidine intermediate role is filled by H117.

It belongs to the NDK family. As to quaternary structure, homotetramer. Mg(2+) serves as cofactor.

The protein localises to the cytoplasm. It catalyses the reaction a 2'-deoxyribonucleoside 5'-diphosphate + ATP = a 2'-deoxyribonucleoside 5'-triphosphate + ADP. It carries out the reaction a ribonucleoside 5'-diphosphate + ATP = a ribonucleoside 5'-triphosphate + ADP. Functionally, major role in the synthesis of nucleoside triphosphates other than ATP. The ATP gamma phosphate is transferred to the NDP beta phosphate via a ping-pong mechanism, using a phosphorylated active-site intermediate. This chain is Nucleoside diphosphate kinase, found in Paraburkholderia phymatum (strain DSM 17167 / CIP 108236 / LMG 21445 / STM815) (Burkholderia phymatum).